The primary structure comprises 66 residues: Toxin BeM14 (66 aa).

Positions 2–66 (RDAYIADDRN…IRKIPGEECR (65 aa)) constitute an LCN-type CS-alpha/beta domain. Intrachain disulfides connect cysteine 12–cysteine 65, cysteine 16–cysteine 36, cysteine 22–cysteine 46, and cysteine 26–cysteine 48.

It belongs to the long (4 C-C) scorpion toxin superfamily. Sodium channel inhibitor family. Alpha subfamily. Expressed by the venom gland.

It localises to the secreted. In terms of biological role, alpha toxins bind voltage-independently at site-3 of sodium channels (Nav) and inhibit the inactivation of the activated channels, thereby blocking neuronal transmission. Has paralytic activity in mice. The sequence is that of Toxin BeM14 from Mesobuthus eupeus (Lesser Asian scorpion).